The primary structure comprises 100 residues: UPF0473 protein Csac_1599 (100 aa).

Belongs to the UPF0473 family.

In Caldicellulosiruptor saccharolyticus (strain ATCC 43494 / DSM 8903 / Tp8T 6331), this protein is UPF0473 protein Csac_1599.